The following is an 835-amino-acid chain: DNA primase (835 aa).

The CHC2-type zinc finger occupies 778 to 817 (CLNFKHRLKTQSVRIFLSLHLTPDNCVTLTLMSQCFASKC).

This sequence belongs to the herpesviridae DNA primase family. As to quaternary structure, associates with the helicase and the primase-associated factor to form the helicase-primase factor.

Its subcellular location is the host nucleus. Essential component of the helicase/primase complex. Unwinds the DNA at the replication forks and generates single-stranded DNA for both leading and lagging strand synthesis. The primase initiates primer synthesis and thereby produces large amount of short RNA primers on the lagging strand that the polymerase elongates using dNTPs. This is DNA primase (56) from Saimiri sciureus (Common squirrel monkey).